A 403-amino-acid polypeptide reads, in one-letter code: ESX-5 secretion system protein EccE5 (403 aa).

Transmembrane regions (helical) follow at residues 9–29 (LALS…ILIV) and 43–63 (IAWW…VVTY).

The protein belongs to the EccE family. In terms of assembly, part of the ESX-5 / type VII secretion system (T7SS), which is composed of cytosolic and membrane components. The ESX-5 membrane complex is composed of EccB5, EccC5, EccD5 and EccE5.

Its subcellular location is the cell inner membrane. Functionally, part of the ESX-5 specialized secretion system, which is responsible for the secretion of EsxN and a number of PE_PGRS and PPE proteins. The chain is ESX-5 secretion system protein EccE5 from Mycobacterium marinum (strain ATCC BAA-535 / M).